Reading from the N-terminus, the 307-residue chain is MALKQEMAKSLLKTASLSGRTKLLHQTGLSLYSTSHGFYEEEVKKTLQQFPGGSIDLQKEDNGIGILTLNNPSRMNAFSGVMMLQLLEKVIELENWTEGKGLIVRGAKNTFSSGSDLNAVKSLGTPEDGMAVCMFMQNTLTRFMRLPLISVALVQGWALGGGAEFTTACDFRLMTPESKIRFVHKEMGIIPSWGGTTRLVEIIGSRQALKVLSGALKLDSKNALNIGMVEEVLQSSDETKSLEEAQEWLKQFIQGPPEVIRALKKSVCSGRELYLEEALQNERDLLGTVWGGPANLEAIAKKGKFNK.

Position 2 is an N-acetylalanine (Ala2). Residue Lys217 is modified to N6-acetyllysine; alternate. N6-succinyllysine; alternate is present on Lys217. Lys301 carries the post-translational modification N6-succinyllysine.

The protein belongs to the enoyl-CoA hydratase/isomerase family.

It localises to the cytoplasm. The protein localises to the cytosol. It carries out the reaction (2S)-ethylmalonyl-CoA + H(+) = butanoyl-CoA + CO2. It catalyses the reaction (S)-methylmalonyl-CoA + H(+) = propanoyl-CoA + CO2. The enzyme catalyses (2R)-ethylmalonyl-CoA + H(+) = butanoyl-CoA + CO2. In terms of biological role, decarboxylates ethylmalonyl-CoA, a potentially toxic metabolite, to form butyryl-CoA, suggesting it might be involved in metabolite proofreading. Acts preferentially on (S)-ethylmalonyl-CoA but also has some activity on the (R)-isomer. Also has methylmalonyl-CoA decarboxylase activity at lower level. In Homo sapiens (Human), this protein is Ethylmalonyl-CoA decarboxylase (ECHDC1).